The following is a 439-amino-acid chain: Probable aspartic proteinase GIP2 (439 aa).

The N-terminal stretch at 1-23 (MASSCCLHAILLCSLLFITSTTA) is a signal peptide. The 374-residue stretch at 47–420 (YLTQIQQRTP…DLARSRLGFT (374 aa)) folds into the Peptidase A1 domain. Residues Asn-116, Asn-280, Asn-323, and Asn-434 are each glycosylated (N-linked (GlcNAc...) asparagine).

Belongs to the peptidase A1 family. As to quaternary structure, interacts with the Phytophtora parasitica xyloglucanase XEG1 and xyloglucanase-like XLP1. Possesses stronger binding affinity with XLP1, a truncated paralog of P.parasitica XEG1 which has no enzyme activity.

It localises to the secreted. Its subcellular location is the extracellular space. It is found in the apoplast. Its function is as follows. Involved in plant defense against Phytophtora parasitica. Contributes positively to Nicotiana resistance against P.parasitica. Binds the P.parasitica xyloglucanase XEG1 and inhibits its cell wall degrading enzyme activity and its contribution as P.parasitica virulence factor. XEG1 acts as an important virulence factor during P.parasitica infection but also acts as a pathogen-associated molecular pattern (PAMP) in Nictotiana species, where it can trigger defense responses including cell death. Functionally, (Microbial infection) Possesses stronger binding affinity with XLP1, a truncated paralog of P.parasitica XEG1 which has no enzyme activity. Is impaired in its inhibitor activity towards the P.parasitica xyloglucanase XEG1 when hijacked by XLP1 binding. The polypeptide is Probable aspartic proteinase GIP2 (Nicotiana benthamiana).